The primary structure comprises 172 residues: Ribosome maturation factor RimM (172 aa).

Residues 96–168 form the PRC barrel domain; the sequence is EGEFYYHQII…RVDVELMEGL (73 aa).

This sequence belongs to the RimM family. Binds ribosomal protein uS19.

It is found in the cytoplasm. Its function is as follows. An accessory protein needed during the final step in the assembly of 30S ribosomal subunit, possibly for assembly of the head region. Essential for efficient processing of 16S rRNA. May be needed both before and after RbfA during the maturation of 16S rRNA. It has affinity for free ribosomal 30S subunits but not for 70S ribosomes. This Streptococcus pyogenes serotype M3 (strain ATCC BAA-595 / MGAS315) protein is Ribosome maturation factor RimM.